Consider the following 555-residue polypeptide: FACT complex subunit POB3 (555 aa).

Positions 194-209 are enriched in basic and acidic residues; sequence EAEAEDGVKSEVKTEE. Disordered regions lie at residues 194-217 and 476-555; these read EAEA…PDVQ and NEDK…AKLE. Over residues 520 to 531 the composition is skewed to acidic residues; sequence DEDDDVAEEFDS. The span at 541-555 shows a compositional bias: basic and acidic residues; sequence ETSKSERPSKKAKLE.

The protein belongs to the SSRP1 family. Forms a stable heterodimer with SPT16. The SPT16-POB3 dimer weakly associates with multiple molecules of NHP6 to form the FACT complex.

Its subcellular location is the nucleus. It is found in the chromosome. Functionally, component of the FACT complex, a general chromatin factor that acts to reorganize nucleosomes. The FACT complex is involved in multiple processes that require DNA as a template such as mRNA elongation, DNA replication and DNA repair. During transcription elongation the FACT complex acts as a histone chaperone that both destabilizes and restores nucleosomal structure. It facilitates the passage of RNA polymerase II and transcription by promoting the dissociation of one histone H2A-H2B dimer from the nucleosome, then subsequently promotes the reestablishment of the nucleosome following the passage of RNA polymerase II. The protein is FACT complex subunit POB3 (POB3) of Kluyveromyces lactis (strain ATCC 8585 / CBS 2359 / DSM 70799 / NBRC 1267 / NRRL Y-1140 / WM37) (Yeast).